Reading from the N-terminus, the 382-residue chain is Succinate--CoA ligase [ADP-forming] subunit beta (382 aa).

Positions 9 to 240 constitute an ATP-grasp domain; sequence KELFSKYGVK…PRDVSEFEMY (232 aa). ATP-binding positions include lysine 45, 52–54, valine 94, and glutamate 99; that span reads GRG. Mg(2+) contacts are provided by asparagine 193 and aspartate 207. Substrate-binding positions include asparagine 260 and 317–319; that span reads GIT.

It belongs to the succinate/malate CoA ligase beta subunit family. In terms of assembly, heterotetramer of two alpha and two beta subunits. The cofactor is Mg(2+).

The catalysed reaction is succinate + ATP + CoA = succinyl-CoA + ADP + phosphate. It catalyses the reaction GTP + succinate + CoA = succinyl-CoA + GDP + phosphate. It functions in the pathway carbohydrate metabolism; tricarboxylic acid cycle; succinate from succinyl-CoA (ligase route): step 1/1. Its function is as follows. Succinyl-CoA synthetase functions in the citric acid cycle (TCA), coupling the hydrolysis of succinyl-CoA to the synthesis of either ATP or GTP and thus represents the only step of substrate-level phosphorylation in the TCA. The beta subunit provides nucleotide specificity of the enzyme and binds the substrate succinate, while the binding sites for coenzyme A and phosphate are found in the alpha subunit. This is Succinate--CoA ligase [ADP-forming] subunit beta from Pyrobaculum arsenaticum (strain DSM 13514 / JCM 11321 / PZ6).